We begin with the raw amino-acid sequence, 186 residues long: ADP compounds hydrolase NudE (186 aa).

Glutamate 40 is a binding site for substrate. Residues 45–172 (TNREAVMIVP…DFNEARNVSA (128 aa)) enclose the Nudix hydrolase domain. Positions 80 to 101 (GLIDPGESVYEAANRELKEEVG) match the Nudix box motif. Glutamate 95 and glutamate 99 together coordinate a divalent metal cation. A substrate-binding site is contributed by serine 118.

This sequence belongs to the Nudix hydrolase family. In terms of assembly, homodimer. It depends on Mg(2+) as a cofactor.

It catalyses the reaction ADP-D-ribose + H2O = D-ribose 5-phosphate + AMP + 2 H(+). Functionally, active on adenosine(5')triphospho(5')adenosine (Ap3A), ADP-ribose, NADH, adenosine(5')diphospho(5')adenosine (Ap2A). The protein is ADP compounds hydrolase NudE (nudE) of Escherichia coli (strain K12).